The sequence spans 415 residues: Tyrosine--tRNA ligase (415 aa).

Tyr40 lines the L-tyrosine pocket. A 'HIGH' region motif is present at residues 45-54; it reads ATAKSLHVGS. L-tyrosine-binding residues include Tyr178 and Gln182. Residues 238–242 carry the 'KMSKS' region motif; it reads KMGKS. Lys241 is an ATP binding site. Residues 350-414 form the S4 RNA-binding domain; that stretch reads ASIVQLIVKT…GKKRHALVQL (65 aa).

It belongs to the class-I aminoacyl-tRNA synthetase family. TyrS type 1 subfamily. In terms of assembly, homodimer.

The protein localises to the cytoplasm. The catalysed reaction is tRNA(Tyr) + L-tyrosine + ATP = L-tyrosyl-tRNA(Tyr) + AMP + diphosphate + H(+). In terms of biological role, catalyzes the attachment of tyrosine to tRNA(Tyr) in a two-step reaction: tyrosine is first activated by ATP to form Tyr-AMP and then transferred to the acceptor end of tRNA(Tyr). This chain is Tyrosine--tRNA ligase, found in Ruegeria pomeroyi (strain ATCC 700808 / DSM 15171 / DSS-3) (Silicibacter pomeroyi).